The following is a 218-amino-acid chain: Telomere repeats-binding bouquet formation protein 2 (218 aa).

The interval 117–143 (HDRMASSDKENIRPTPEHKQELSKSAE) is disordered.

It belongs to the TERB2 family. As to quaternary structure, component of the MAJIN-TERB1-TERB2 complex, composed of MAJIN, TERB1 and TERB2. As to expression, specifically expressed in germline tissues.

Its subcellular location is the chromosome. It localises to the telomere. The protein resides in the nucleus inner membrane. In terms of biological role, meiosis-specific telomere-associated protein involved in meiotic telomere attachment to the nucleus inner membrane, a crucial step for homologous pairing and synapsis. Component of the MAJIN-TERB1-TERB2 complex, which promotes telomere cap exchange by mediating attachment of telomeric DNA to the inner nuclear membrane and replacement of the protective cap of telomeric chromosomes: in early meiosis, the MAJIN-TERB1-TERB2 complex associates with telomeric DNA and the shelterin/telosome complex. During prophase, the complex matures and promotes release of the shelterin/telosome complex from telomeric DNA. The polypeptide is Telomere repeats-binding bouquet formation protein 2 (Mus musculus (Mouse)).